A 178-amino-acid chain; its full sequence is N-alpha-acetyltransferase 20 (178 aa).

The region spanning T2–S157 is the N-acetyltransferase domain. The tract at residues D159–E178 is disordered.

Belongs to the acetyltransferase family. ARD1 subfamily. In terms of assembly, component of the N-terminal acetyltransferase B (NatB) complex which is composed of naa20 and naa25.

Its subcellular location is the cytoplasm. The protein resides in the nucleus. It carries out the reaction N-terminal L-methionyl-L-asparaginyl-[protein] + acetyl-CoA = N-terminal N(alpha)-acetyl-L-methionyl-L-asparaginyl-[protein] + CoA + H(+). It catalyses the reaction N-terminal L-methionyl-L-glutaminyl-[protein] + acetyl-CoA = N-terminal N(alpha)-acetyl-L-methionyl-L-glutaminyl-[protein] + CoA + H(+). The enzyme catalyses N-terminal L-methionyl-L-aspartyl-[protein] + acetyl-CoA = N-terminal N(alpha)-acetyl-L-methionyl-L-aspartyl-[protein] + CoA + H(+). The catalysed reaction is N-terminal L-methionyl-L-glutamyl-[protein] + acetyl-CoA = N-terminal N(alpha)-acetyl-L-methionyl-L-glutamyl-[protein] + CoA + H(+). Functionally, catalytic subunit of the NatB complex which catalyzes acetylation of the N-terminal methionine residues of peptides beginning with Met-Asp, Met-Glu, Met-Asn and Met-Gln. Proteins with cell cycle functions are overrepresented in the pool of NatB substrates. Required for maintaining the structure and function of actomyosin fibers and for proper cellular migration. The sequence is that of N-alpha-acetyltransferase 20 (naa20) from Xenopus laevis (African clawed frog).